A 28-amino-acid polypeptide reads, in one-letter code: Kappa-stichotoxin-Shd1a/kappa-stichotoxin-Shd1b (28 aa).

P6 is modified (4-hydroxyproline; in form SHTX-1 (Shd1a)). 2 disulfides stabilise this stretch: C7–C19 and C10–C25.

The protein belongs to the sea anemone BBH family. Occurs in 2 forms which differ in the post-translational modification of Pro-6. In form SHTX-1 (Shd1a) Pro-6 is a hydroxyproline while in form SHTX-2 (Shd1b) Pro-6 is unmodified.

Its subcellular location is the secreted. It localises to the nematocyst. Kappa-stichotoxin-Shd1a: inhibits voltage-gated potassium channels (Kv). Its function is as follows. Kappa-stichotoxin-Shd1b: inhibits voltage-gated potassium channels (Kv). This toxin inhibits the binding of 125I-alpha-dendrotoxin to synaptosomal membranes (IC(50)=270 nM). The polypeptide is Kappa-stichotoxin-Shd1a/kappa-stichotoxin-Shd1b (Stichodactyla haddoni (Saddle carpet anemone)).